The sequence spans 501 residues: Dihydrolipoyl dehydrogenase, mitochondrial (501 aa).

The N-terminal 31 residues, 1-31, are a transit peptide targeting the mitochondrion; sequence MAMANLARRKGYSLLSSETLRYSFSLRSRAF. FAD contacts are provided by residues 67-76, K85, G149, and 178-180; these read EKRGALGGTC and TGS. An intrachain disulfide couples C76 to C81. Residues 215-222, E238, V272, and G307 each bind NAD(+); that span reads GAGYIGLE. Residues D348 and 354 to 357 each bind FAD; that span reads MLAH. H480 (proton acceptor) is an active-site residue.

This sequence belongs to the class-I pyridine nucleotide-disulfide oxidoreductase family. Homodimer. It depends on FAD as a cofactor.

It localises to the mitochondrion matrix. The catalysed reaction is N(6)-[(R)-dihydrolipoyl]-L-lysyl-[protein] + NAD(+) = N(6)-[(R)-lipoyl]-L-lysyl-[protein] + NADH + H(+). Lipoamide dehydrogenase is a component of the glycine cleavage system as well as of the alpha-ketoacid dehydrogenase complexes. The pyruvate dehydrogenase complex contains multiple copies of three enzymatic components: pyruvate dehydrogenase (E1), dihydrolipoamide acetyltransferase (E2) and lipoamide dehydrogenase (E3). This Pisum sativum (Garden pea) protein is Dihydrolipoyl dehydrogenase, mitochondrial (LPD).